We begin with the raw amino-acid sequence, 201 residues long: uncharacterized protein (201 aa).

As to quaternary structure, interacts with the chaperones HSP82 and HSC82.

This is an uncharacterized protein from Saccharomyces cerevisiae (strain ATCC 204508 / S288c) (Baker's yeast).